We begin with the raw amino-acid sequence, 473 residues long: LEC14B protein (473 aa).

5 WD repeats span residues 212 to 242, 254 to 285, 301 to 331, 377 to 413, and 425 to 455; these read GYSFGVFSIKFSTDGREIVAGTSDESICVYD, AHESDVNSVCFADESGHLIYSGSDDNLCKVWD, GHLEGITFIDSRGDGRYFISNGKDQTIKLWD, GHSVLCTLIRCYFSPDYSTGQKYIYTGSHDANVYIYD, and YHKATVRDCSWHPNYPMLVSSSFDGEIVKWE.

This sequence belongs to the WD repeat LEC14B family.

This is LEC14B protein from Lithospermum erythrorhizon (Purple gromwell).